The sequence spans 64 residues: Large ribosomal subunit protein bL35 (64 aa).

Residues 1–43 (MPKMKSKKSLAKRVIAKKNGTLKRGKAYRSHRATGKTTKQKRH) form a disordered region.

It belongs to the bacterial ribosomal protein bL35 family.

The chain is Large ribosomal subunit protein bL35 from Mesoplasma florum (strain ATCC 33453 / NBRC 100688 / NCTC 11704 / L1) (Acholeplasma florum).